Here is a 379-residue protein sequence, read N- to C-terminus: MSHSGADPEQRQQASEADAMAATFRASEHQHIRYNPLQDEWVLVSAHRMKRPWQGQVEPQLLKTVPRHDPLNPLCPGATRANGEVNPHYDGTFLFDNDFPALQPDAPDPGPSDHPLFRAEAARGVCKVMCFHPWSDVTLPLMSVPEIRAVIDAWASVTEELGAQYPWVQIFENKGAMMGCSNPHPHCQVWASSFLPDIAQREERSQQTYHSQHGKPLLLEYGHQELLRKERLVLTSEHWIVLVPFWAVWPFQTLLLPRRHVRRLPELNPAERDDLASIMKKLLTKYDNLFETSFPYSMGWHGAPTGLKTGATCDHWQLHAHYYPPLLRSATVRKFMVGYEMLAQAQRDLTPEQAAERLRALPEVHYCLAQKDKETAAIA.

The segment covering Met-1–Gln-10 has biased composition (basic and acidic residues). The segment at Met-1–Met-20 is disordered. A Zn(2+)-binding site is contributed by Cys-75. Residues Ala-81, Asn-97–Asp-98, and Asn-173 each bind UDP-alpha-D-glucose. His-184 contacts Zn(2+). The active-site Tele-UMP-histidine intermediate is the His-186. Gln-188 contributes to the UDP-alpha-D-glucose binding site. Zn(2+) contacts are provided by Glu-202, His-301, His-319, and His-321. UDP-alpha-D-glucose contacts are provided by residues Lys-334 to Val-337 and Tyr-339 to Glu-340.

It belongs to the galactose-1-phosphate uridylyltransferase type 1 family. As to quaternary structure, homodimer. It depends on Zn(2+) as a cofactor.

It carries out the reaction alpha-D-galactose 1-phosphate + UDP-alpha-D-glucose = alpha-D-glucose 1-phosphate + UDP-alpha-D-galactose. The protein operates within carbohydrate metabolism; galactose metabolism. In terms of biological role, plays an important role in galactose metabolism. This chain is Galactose-1-phosphate uridylyltransferase (Galt), found in Mus musculus (Mouse).